The following is a 239-amino-acid chain: tRNA (guanine-N(7)-)-methyltransferase (239 aa).

S-adenosyl-L-methionine is bound by residues Gly-64, 87-88 (EI), 120-121 (NA), and Leu-140. Residue Asp-143 is part of the active site. 218–220 (SEE) is an S-adenosyl-L-methionine binding site.

This sequence belongs to the class I-like SAM-binding methyltransferase superfamily. TrmB family.

It is found in the nucleus. It catalyses the reaction guanosine(46) in tRNA + S-adenosyl-L-methionine = N(7)-methylguanosine(46) in tRNA + S-adenosyl-L-homocysteine. It functions in the pathway tRNA modification; N(7)-methylguanine-tRNA biosynthesis. Functionally, catalyzes the formation of N(7)-methylguanine at position 46 (m7G46) in tRNA. This chain is tRNA (guanine-N(7)-)-methyltransferase, found in Culex quinquefasciatus (Southern house mosquito).